Reading from the N-terminus, the 251-residue chain is Large ribosomal subunit protein uL16m (251 aa).

A mitochondrion-targeting transit peptide spans 1 to 29 (MWRLLTRVPAPLLRMHFSDSWAALPTSAG).

The protein belongs to the universal ribosomal protein uL16 family. In terms of assembly, component of the mitochondrial ribosome large subunit (39S) which comprises a 16S rRNA and about 50 distinct proteins.

The protein localises to the mitochondrion. This is Large ribosomal subunit protein uL16m (Mrpl16) from Mus musculus (Mouse).